The following is a 93-amino-acid chain: Small ribosomal subunit protein bS20c (93 aa).

This sequence belongs to the bacterial ribosomal protein bS20 family.

The protein resides in the plastid. It is found in the chloroplast. Functionally, binds directly to 16S ribosomal RNA. This is Small ribosomal subunit protein bS20c from Thalassiosira pseudonana (Marine diatom).